The primary structure comprises 383 residues: Arginine biosynthesis bifunctional protein ArgJ (383 aa).

Substrate-binding residues include T146, K168, T179, E259, N378, and T383. Residue T179 is the Nucleophile of the active site.

It belongs to the ArgJ family. As to quaternary structure, heterotetramer of two alpha and two beta chains.

It localises to the cytoplasm. The enzyme catalyses N(2)-acetyl-L-ornithine + L-glutamate = N-acetyl-L-glutamate + L-ornithine. It carries out the reaction L-glutamate + acetyl-CoA = N-acetyl-L-glutamate + CoA + H(+). Its pathway is amino-acid biosynthesis; L-arginine biosynthesis; L-ornithine and N-acetyl-L-glutamate from L-glutamate and N(2)-acetyl-L-ornithine (cyclic): step 1/1. It participates in amino-acid biosynthesis; L-arginine biosynthesis; N(2)-acetyl-L-ornithine from L-glutamate: step 1/4. Catalyzes two activities which are involved in the cyclic version of arginine biosynthesis: the synthesis of N-acetylglutamate from glutamate and acetyl-CoA as the acetyl donor, and of ornithine by transacetylation between N(2)-acetylornithine and glutamate. This Thermobifida fusca (strain YX) protein is Arginine biosynthesis bifunctional protein ArgJ.